A 505-amino-acid chain; its full sequence is Histidine ammonia-lyase (505 aa).

The 5-imidazolinone (Ala-Gly) cross-link spans 144–146 (ASG). Residue S145 is modified to 2,3-didehydroalanine (Ser).

Belongs to the PAL/histidase family. Post-translationally, contains an active site 4-methylidene-imidazol-5-one (MIO), which is formed autocatalytically by cyclization and dehydration of residues Ala-Ser-Gly.

It localises to the cytoplasm. The catalysed reaction is L-histidine = trans-urocanate + NH4(+). It functions in the pathway amino-acid degradation; L-histidine degradation into L-glutamate; N-formimidoyl-L-glutamate from L-histidine: step 1/3. This chain is Histidine ammonia-lyase, found in Legionella pneumophila (strain Corby).